The chain runs to 227 residues: Guanylate kinase (227 aa).

The region spanning glycine 21–alanine 199 is the Guanylate kinase-like domain. Alanine 28–serine 35 serves as a coordination point for ATP.

The protein belongs to the guanylate kinase family.

The protein resides in the cytoplasm. The catalysed reaction is GMP + ATP = GDP + ADP. Its function is as follows. Essential for recycling GMP and indirectly, cGMP. The chain is Guanylate kinase from Burkholderia orbicola (strain AU 1054).